We begin with the raw amino-acid sequence, 231 residues long: 5'-methylthioadenosine/S-adenosylhomocysteine nucleosidase (231 aa).

Glutamate 12 serves as the catalytic Proton acceptor. Residues glycine 78, valine 153, and 174 to 175 contribute to the substrate site; that span reads ME. The Proton donor role is filled by aspartate 198.

It belongs to the PNP/UDP phosphorylase family. MtnN subfamily.

The catalysed reaction is S-adenosyl-L-homocysteine + H2O = S-(5-deoxy-D-ribos-5-yl)-L-homocysteine + adenine. It catalyses the reaction S-methyl-5'-thioadenosine + H2O = 5-(methylsulfanyl)-D-ribose + adenine. It carries out the reaction 5'-deoxyadenosine + H2O = 5-deoxy-D-ribose + adenine. It participates in amino-acid biosynthesis; L-methionine biosynthesis via salvage pathway; S-methyl-5-thio-alpha-D-ribose 1-phosphate from S-methyl-5'-thioadenosine (hydrolase route): step 1/2. Catalyzes the irreversible cleavage of the glycosidic bond in both 5'-methylthioadenosine (MTA) and S-adenosylhomocysteine (SAH/AdoHcy) to adenine and the corresponding thioribose, 5'-methylthioribose and S-ribosylhomocysteine, respectively. Also cleaves 5'-deoxyadenosine, a toxic by-product of radical S-adenosylmethionine (SAM) enzymes, into 5-deoxyribose and adenine. The chain is 5'-methylthioadenosine/S-adenosylhomocysteine nucleosidase from Vibrio campbellii (strain ATCC BAA-1116).